A 670-amino-acid polypeptide reads, in one-letter code: Sodium/potassium/calcium exchanger 2 (670 aa).

Topologically, residues 1–38 (MDLHQSATVRLLQEWCSHESPSGCRRHYNTRKKLKLIR) are cytoplasmic. Residues 39-59 (VIGLVMGLVAVSTVPFSISAF) traverse the membrane as a helical segment. The Extracellular segment spans residues 60-133 (TETYSQNNRG…DVFSLEERRK (74 aa)). Disordered regions lie at residues 67 to 86 (NRGE…HRQR) and 91 to 122 (LNDK…GDYP). Residues 106–122 (QEDRSENGTDHAQGDYP) are compositionally biased toward basic and acidic residues. N-linked (GlcNAc...) asparagine glycosylation is present at N112. Residues 134–154 (GAIILHVIGMIYMFIALAIVC) form a helical membrane-spanning segment. Residues 155-179 (DEFFVPSLTVITEKLGISDDVAGAT) are Cytoplasmic-facing. The stretch at 175 to 215 (VAGATFMAAGGSAPELFTSLIGVFIAHSNVGIGTIVGSAVF) is one Alpha-1 repeat. The chain crosses the membrane as a helical span at residues 180–200 (FMAAGGSAPELFTSLIGVFIA). The Extracellular segment spans residues 201-205 (HSNVG). A helical transmembrane segment spans residues 206-226 (IGTIVGSAVFNILFVIGMCAL). Over 227–244 (FSREILNLTWWPLFRDVS) the chain is Cytoplasmic. Residues 245-265 (FYIVDLIMLIIFFLDNVIMWW) traverse the membrane as a helical segment. Position 266 (E266) is a topological domain, extracellular. Residues 267 to 287 (SLLLLTAYFAYVVFMKFNVQV) traverse the membrane as a helical segment. Topologically, residues 288 to 506 (ERWVKQMINR…PDVRKPASKK (219 aa)) are cytoplasmic. The segment at 312–335 (ASTAGDKEEPTLPNKPRLQRGGSS) is disordered. Residues S337 and S341 each carry the phosphoserine modification. 2 disordered regions span residues 394-414 (KCQV…DYAA) and 450-471 (AADA…LSLS). A helical membrane pass occupies residues 507-527 (FFPITFFGSITWIAVFSYLMV). Residues 528–542 (WWAHQVGETIGISEE) lie on the Extracellular side of the membrane. A helical transmembrane segment spans residues 543–563 (IMGLTILAAGTSIPDLITSVI). Residues 550 to 581 (AAGTSIPDLITSVIVARKGLGDMAVSSSVGSN) form an Alpha-2 repeat. Over 564–578 (VARKGLGDMAVSSSV) the chain is Cytoplasmic. The chain crosses the membrane as a helical span at residues 579-599 (GSNIFDITVGLPLPWLLYTII). The Extracellular portion of the chain corresponds to 600-611 (HRFKPVTVSSNG). The chain crosses the membrane as a helical span at residues 612-632 (LFCAIVLLFIMLIFVILSIAL). The Cytoplasmic segment spans residues 633–639 (CKWRMNK). A helical membrane pass occupies residues 640 to 660 (ILGFIMFGLYFAFLVVSVLLE). The Extracellular portion of the chain corresponds to 661–670 (DKVLECPVSI).

The protein belongs to the Ca(2+):cation antiporter (CaCA) (TC 2.A.19) family. SLC24A subfamily. Expressed abundantly in all regions of the brain and weakly in the eye, large intestine and adrenal tissue.

The protein resides in the cell membrane. The enzyme catalyses Ca(2+)(out) + K(+)(out) + 4 Na(+)(in) = Ca(2+)(in) + K(+)(in) + 4 Na(+)(out). Calcium, potassium:sodium antiporter that transports 1 Ca(2+) and 1 K(+) in exchange for 4 Na(+). Required for learming and memory by regulating neuronal Ca(2+), which is essential for the development of synaptic plasticity. The sequence is that of Sodium/potassium/calcium exchanger 2 (Slc24a2) from Rattus norvegicus (Rat).